Here is a 632-residue protein sequence, read N- to C-terminus: Epsin-3 (632 aa).

A 1,2-diacyl-sn-glycero-3-phospho-(1D-myo-inositol-4,5-bisphosphate)-binding residues include arginine 8, lysine 11, arginine 25, asparagine 30, arginine 63, and histidine 73. Residues 12 to 144 enclose the ENTH domain; the sequence is NIVHNYSEAE…KDEERLRQER (133 aa). Residues 172 to 214 are disordered; sequence YGEDYSRSRGSPSSYNSSSSSPRYTSDLEQARPQTSGEEELQL. Low complexity predominate over residues 179-196; it reads SRGSPSSYNSSSSSPRYT. Serine 191 and serine 192 each carry phosphoserine. 2 UIM domains span residues 209–228 and 236–255; these read EEELQLQLALAMSREEAEKP and DEDLQLQLALRLSRQEHEKE. Positions 257–296 are disordered; the sequence is RSWQGDGSPMANGAGAVVHHQRDREPEREERKEEEKLKTS. Phosphoserine is present on serine 264. Basic and acidic residues predominate over residues 276 to 294; sequence HQRDREPEREERKEEEKLK. 8 consecutive repeat copies span residues 321–323, 344–346, 371–373, 387–389, 404–406, 524–526, 537–539, and 629–631. A 5 X 3 AA repeats of [DE]-P-W region spans residues 321–406; sequence DPWDIPGFRP…KLPSTGADPW (86 aa). Disordered regions lie at residues 326–501, 525–560, and 604–632; these read PGFR…SFLG, PFLTGLSAPSPTNPFGAGEPGRPTLNQMRTGSPALG, and AFAPQPLLPTPSSAGPRPPPPQTGTNPFL. Residues 353-371 are compositionally biased toward polar residues; sequence TVLSRSQPWDLTPMLSSSE. A 3 X 3 AA repeats of N-P-F region spans residues 524–631; it reads NPFLTGLSAP…PPPQTGTNPF (108 aa).

The protein belongs to the epsin family. As to expression, detected in migrating keratinocytes from wounded skin, but not in differentiating keratinocytes or in normal skin. Detected in chronic wounds, basal cell carcinoma and ulcerative colitis.

It localises to the cytoplasm. Its subcellular location is the perinuclear region. It is found in the cytoplasmic vesicle. The protein resides in the clathrin-coated vesicle. The protein localises to the nucleus. This chain is Epsin-3 (EPN3), found in Homo sapiens (Human).